The chain runs to 181 residues: Adenylate kinase (181 aa).

10 to 15 (GAGKGT) is a binding site for ATP. The NMP stretch occupies residues 30–59 (STGDLFRANIGEGTPLGKEAKSYIDAGKLV). AMP-binding positions include Thr-31, Arg-36, 57–59 (KLV), 85–88 (GFPR), and Gln-92. Positions 126 to 132 (ARGRADD) are LID. Residue Arg-127 participates in ATP binding. Residues Arg-129 and Arg-140 each coordinate AMP. Gly-166 contacts ATP.

It belongs to the adenylate kinase family. In terms of assembly, monomer.

It is found in the cytoplasm. It carries out the reaction AMP + ATP = 2 ADP. It functions in the pathway purine metabolism; AMP biosynthesis via salvage pathway; AMP from ADP: step 1/1. Catalyzes the reversible transfer of the terminal phosphate group between ATP and AMP. Plays an important role in cellular energy homeostasis and in adenine nucleotide metabolism. In Corynebacterium diphtheriae (strain ATCC 700971 / NCTC 13129 / Biotype gravis), this protein is Adenylate kinase.